Reading from the N-terminus, the 451-residue chain is MEKTKLTGRIVTRDDPDYNEARTNINLSLERYPDIIVFCQNKQDALNALKWARENRVPFRIRGGRHSYENFSLLNNGLVIDLSEMKKITVNQDKKLAYIEAGAELGEVYRTLWQYGLTLPAGTIANVGLTGLTLGGGIGLLTRAAGLTCDSLVQLEMIVADEKEGADLITVSCSNHPDLFWASQGGGGGNFGIVTSMTFKAVPISQVSIFSITWGWDDFEEVYNTWQNWAPYTDDRLTSSIEFWPKEVNRIEALGQFVGPKTELKKLLKPLLKAGSPTSGMVKTTPFIEAVTFFNSPGGNQPQKMKRSGSFIEKPLSERAISTIKHFLEHAPNQNASVWQQALGGAAGRVAPDQTAFYYRDAIIAQEYLTNWTSPGEKRQNVRWIEGLRTSLSKETMGDYVNWPDIEIRNWPRTYYGENVERLRRVKTTYDPENVFRFEQSIPPLRRSLFF.

The FAD-binding PCMH-type domain maps to 29-204 (LERYPDIIVF…TSMTFKAVPI (176 aa)). Histidine 66 bears the Pros-8alpha-FAD histidine mark.

It belongs to the oxygen-dependent FAD-linked oxidoreductase family. It depends on FAD as a cofactor.

This is an uncharacterized protein from Bacillus subtilis (strain 168).